The primary structure comprises 341 residues: Glucokinase (341 aa).

7-12 (GDIGGT) contributes to the ATP binding site.

It belongs to the bacterial glucokinase family.

It is found in the cytoplasm. It catalyses the reaction D-glucose + ATP = D-glucose 6-phosphate + ADP + H(+). The polypeptide is Glucokinase (Nostoc punctiforme (strain ATCC 29133 / PCC 73102)).